We begin with the raw amino-acid sequence, 133 residues long: Small ribosomal subunit protein uS8 (133 aa).

The protein belongs to the universal ribosomal protein uS8 family. Part of the 30S ribosomal subunit. Contacts proteins S5 and S12.

Functionally, one of the primary rRNA binding proteins, it binds directly to 16S rRNA central domain where it helps coordinate assembly of the platform of the 30S subunit. The polypeptide is Small ribosomal subunit protein uS8 (Salinibacter ruber (strain DSM 13855 / M31)).